Here is a 287-residue protein sequence, read N- to C-terminus: Orotidine 5'-phosphate decarboxylase (287 aa).

Catalysis depends on lysine 95, which acts as the Proton donor.

The protein belongs to the OMP decarboxylase family. Type 2 subfamily.

The catalysed reaction is orotidine 5'-phosphate + H(+) = UMP + CO2. Its pathway is pyrimidine metabolism; UMP biosynthesis via de novo pathway; UMP from orotate: step 2/2. The chain is Orotidine 5'-phosphate decarboxylase from Albidiferax ferrireducens (strain ATCC BAA-621 / DSM 15236 / T118) (Rhodoferax ferrireducens).